Here is a 324-residue protein sequence, read N- to C-terminus: MGRSPCCEKKNGLKKGPWTPEEDQKLIDYINIHGYGNWRTLPKNAGLQRCGKSCRLRWTNYLRPDIKRGRFSFEEEETIIQLHSIMGNKWSAIAARLPGRTDNEIKNYWNTHIRKRLLKMGIDPVTHTPRLDLLDISSILSSSIYNSSHHHHHHHQQHMNMSRLMMSDGNHQPLVNPEILKLATSLFSNQNHPNNTHENNTVNQTEVNQYQTGYNMPGNEELQSWFPIMDQFTNFQDLMPMKTTVQNSLSYDDDCSKSNFVLEPYYSDFASVLTTPSSSPTPLNSSSSTYINSSTCSTEDEKESYYSDNITNYSFDVNGFLQFQ.

2 HTH myb-type domains span residues 10 to 62 and 63 to 117; these read KNGL…TNYL and RPDI…RKRL. 2 consecutive DNA-binding regions (H-T-H motif) follow at residues 38–62 and 90–113; these read WRTL…TNYL and WSAI…NTHI.

Highly expressed in flowers and at lower levels in rosette leaves and cauline leaves. Expressed at low levels in roots, stems and siliques.

It is found in the nucleus. In terms of biological role, probable transcription factor that may function in salt stress response. This is Transcription factor MYB74 from Arabidopsis thaliana (Mouse-ear cress).